Here is a 90-residue protein sequence, read N- to C-terminus: Accessory gland-specific peptide 26Ab (90 aa).

The signal sequence occupies residues 1 to 21 (MNYFAVLCIFSCICLWQFSDA).

As to expression, main cells of the accessory glands of males.

It localises to the secreted. It is found in the extracellular space. Functionally, this protein is transferred from male to female during mating and may affect egglaying and behavior after mating. The sequence is that of Accessory gland-specific peptide 26Ab (Acp26Ab) from Drosophila mauritiana (Fruit fly).